The chain runs to 212 residues: Probable U3 small nucleolar RNA-associated protein 11 (212 aa).

This sequence belongs to the UTP11 family. Component of the ribosomal small subunit (SSU) processome.

It localises to the nucleus. Its subcellular location is the nucleolus. Functionally, involved in nucleolar processing of pre-18S ribosomal RNA. The polypeptide is Probable U3 small nucleolar RNA-associated protein 11 (Plasmodium falciparum (isolate 3D7)).